We begin with the raw amino-acid sequence, 666 residues long: Endogenous retrovirus group K member 6 Gag polyprotein (666 aa).

Glycine 2 carries the N-myristoyl glycine lipid modification. Positions 165 to 264 are disordered; it reads GKGPELVGPS…APPSRQGSKL (100 aa). Residues 232-247 are compositionally biased toward pro residues; sequence GMPPAPQGRAPYPQPP. 2 CCHC-type zinc fingers span residues 544-561 and 580-597; these read RKCY…NCPV and DLCP…QCRS. Residues 598-642 form a disordered region; sequence KFDKNGQPLSGNEQRGQPQAPQQTGAFPIQPFVPQGFQGQQPPLS. A compositionally biased stretch (polar residues) spans 604–622; sequence QPLSGNEQRGQPQAPQQTG. Residues 624 to 640 show a composition bias toward low complexity; that stretch reads FPIQPFVPQGFQGQQPP.

Belongs to the beta type-B retroviral Gag protein family. HERV class-II K(HML-2) gag subfamily. Post-translationally, myristoylation is essential for retroviral assembly. Alteration of the glycine residue leads to a block in the budding of particles and an accumulation of Gag inside the cell. Specific enzymatic cleavages may yield mature proteins.

It is found in the cell membrane. Functionally, the products of the Gag polyproteins of infectious retroviruses perform highly complex orchestrated tasks during the assembly, budding, maturation, and infection stages of the viral replication cycle. During viral assembly, the proteins form membrane associations and self-associations that ultimately result in budding of an immature virion from the infected cell. Gag precursors also function during viral assembly to selectively bind and package two plus strands of genomic RNA. Endogenous Gag proteins may have kept, lost or modified their original function during evolution. The sequence is that of Endogenous retrovirus group K member 6 Gag polyprotein (ERVK-6) from Homo sapiens (Human).